The sequence spans 129 residues: Transcriptional activator protein (129 aa).

The segment covering 1–12 (MRSSSPSQPPSI) has biased composition (low complexity). The disordered stretch occupies residues 1-23 (MRSSSPSQPPSIKKAHRQAKKRA). The span at 13-23 (KKAHRQAKKRA) shows a compositional bias: basic residues. Positions 13 to 28 (KKAHRQAKKRAIRRRR) match the Nuclear localization signal motif. Residues 33–50 (CGCSIYFHIDCAGHGFTH) fold into a zinc finger. The segment at 73–117 (LFQDKPSRGHAIHQDQDIQRPNPVQPQPQESIGSPQSIPELPSLD) is disordered. Residues 99–109 (QPQESIGSPQS) show a composition bias toward polar residues. The interval 115–129 (SLDDIDDSFWVELFS) is transactivation.

It belongs to the geminiviridae transcriptional activator protein family. Monomer. Homodimer. Homooligomer. Self-interaction correlates with nuclear localization and efficient activation of transcription. Monomers suppress local silencing by interacting with and inactivating host adenosine kinase 2 (ADK2) in the cytoplasm. Interacts with and inhibits host SNF1 kinase. Binds to ssDNA. Phosphorylated.

Its subcellular location is the host nucleus. It localises to the host cytoplasm. Its function is as follows. Strong activator of the late viral genes promoters. Enhances the expression of the capsid protein and nuclear shuttle protein. Acts as a suppressor of RNA-mediated gene silencing, also known as post-transcriptional gene silencing (PTGS), a mechanism of plant viral defense that limits the accumulation of viral RNAs. Suppresses the host RNA silencing by inhibiting adenosine kinase 2 (ADK2), a kinase involved in a general methylation pathway. Also suppresses the host basal defense by interacting with and inhibiting SNF1 kinase, a key regulator of cell metabolism implicated in innate antiviral defense. Determines pathogenicity. This is Transcriptional activator protein from Solanum tuberosum (Potato).